A 330-amino-acid chain; its full sequence is MKKSFIHQQQEISFVKNTFTQYLIDKLEIVEVQGPILSQVGDGMQDNLSGIEHPVSVKVLNIPEAEFEVVHSLAKWKRHTLARFGFNEGEGLFVHMKALRPDEDSLDPTHSVYVDQWDWEKVIPDGRRNLDYLKETVEKIYKAIRLTELAVEARFDIESILPKRITFIHTEELVEKYPDLSPKERENAIAKEYGAVFLIGIGGELADGKPHDGRAPDYDDWTTPSENGFKGLNGDILVWNEQLGTAFELSSMGIRVDEDALKRQVVLTGDEDRLEFEWHKTLLRGFFPLTIGGGIGQSRLAMFLLRKKHIGEVQSSVWPKEVRDTFENIL.

The protein belongs to the class-II aminoacyl-tRNA synthetase family. AsnA subfamily.

It is found in the cytoplasm. The catalysed reaction is L-aspartate + NH4(+) + ATP = L-asparagine + AMP + diphosphate + H(+). The protein operates within amino-acid biosynthesis; L-asparagine biosynthesis; L-asparagine from L-aspartate (ammonia route): step 1/1. The chain is Aspartate--ammonia ligase from Streptococcus agalactiae serotype Ia (strain ATCC 27591 / A909 / CDC SS700).